We begin with the raw amino-acid sequence, 378 residues long: Queuine tRNA-ribosyltransferase (378 aa).

The active-site Proton acceptor is aspartate 90. Residues 90 to 94 (DSGGF), aspartate 144, glutamine 188, and glycine 220 each bind substrate. The segment at 251–257 (GVGTPED) is RNA binding. The Nucleophile role is filled by aspartate 270. An RNA binding; important for wobble base 34 recognition region spans residues 275–279 (TRNAR). 4 residues coordinate Zn(2+): cysteine 308, cysteine 310, cysteine 313, and histidine 339.

This sequence belongs to the queuine tRNA-ribosyltransferase family. Homodimer. Within each dimer, one monomer is responsible for RNA recognition and catalysis, while the other monomer binds to the replacement base PreQ1. Zn(2+) serves as cofactor.

The enzyme catalyses 7-aminomethyl-7-carbaguanine + guanosine(34) in tRNA = 7-aminomethyl-7-carbaguanosine(34) in tRNA + guanine. It functions in the pathway tRNA modification; tRNA-queuosine biosynthesis. Its function is as follows. Catalyzes the base-exchange of a guanine (G) residue with the queuine precursor 7-aminomethyl-7-deazaguanine (PreQ1) at position 34 (anticodon wobble position) in tRNAs with GU(N) anticodons (tRNA-Asp, -Asn, -His and -Tyr). Catalysis occurs through a double-displacement mechanism. The nucleophile active site attacks the C1' of nucleotide 34 to detach the guanine base from the RNA, forming a covalent enzyme-RNA intermediate. The proton acceptor active site deprotonates the incoming PreQ1, allowing a nucleophilic attack on the C1' of the ribose to form the product. After dissociation, two additional enzymatic reactions on the tRNA convert PreQ1 to queuine (Q), resulting in the hypermodified nucleoside queuosine (7-(((4,5-cis-dihydroxy-2-cyclopenten-1-yl)amino)methyl)-7-deazaguanosine). The chain is Queuine tRNA-ribosyltransferase from Nautilia profundicola (strain ATCC BAA-1463 / DSM 18972 / AmH).